We begin with the raw amino-acid sequence, 242 residues long: Endothelial protein C receptor (242 aa).

A signal peptide spans 1-17; it reads MLTKFLPLLLLLLPGCA. Topologically, residues 18-214 are extracellular; it reads LCNSDGSQSL…GSQTGRSYTS (197 aa). Asn-46, Asn-63, Asn-140, Asn-166, and Asn-176 each carry an N-linked (GlcNAc...) asparagine glycan. Cystine bridges form between Cys-119–Cys-190 and Cys-223–Cys-236. The helical transmembrane segment at 215–235 threads the bilayer; that stretch reads LVLGILMGCFIIAGVAVGIFM. The Cytoplasmic portion of the chain corresponds to 236–242; it reads CTSGRRC.

As to expression, expressed in endothelial cells.

The protein resides in the membrane. In terms of biological role, binds activated protein C. Enhances protein C activation by the thrombin-thrombomodulin complex; plays a role in the protein C pathway controlling blood coagulation. The chain is Endothelial protein C receptor (Procr) from Mus musculus (Mouse).